Consider the following 297-residue polypeptide: UDP-3-O-acyl-N-acetylglucosamine deacetylase (297 aa).

The Zn(2+) site is built by H79, H238, and D242. H265 serves as the catalytic Proton donor.

This sequence belongs to the LpxC family. Zn(2+) serves as cofactor.

The catalysed reaction is a UDP-3-O-[(3R)-3-hydroxyacyl]-N-acetyl-alpha-D-glucosamine + H2O = a UDP-3-O-[(3R)-3-hydroxyacyl]-alpha-D-glucosamine + acetate. Its pathway is glycolipid biosynthesis; lipid IV(A) biosynthesis; lipid IV(A) from (3R)-3-hydroxytetradecanoyl-[acyl-carrier-protein] and UDP-N-acetyl-alpha-D-glucosamine: step 2/6. Its function is as follows. Catalyzes the hydrolysis of UDP-3-O-myristoyl-N-acetylglucosamine to form UDP-3-O-myristoylglucosamine and acetate, the committed step in lipid A biosynthesis. In Blochmanniella pennsylvanica (strain BPEN), this protein is UDP-3-O-acyl-N-acetylglucosamine deacetylase.